The sequence spans 155 residues: Deoxyuridine 5'-triphosphate nucleotidohydrolase (155 aa).

Substrate is bound by residues 74–76 (RSG), N87, and 91–93 (LID).

The protein belongs to the dUTPase family. Mg(2+) serves as cofactor.

The catalysed reaction is dUTP + H2O = dUMP + diphosphate + H(+). The protein operates within pyrimidine metabolism; dUMP biosynthesis; dUMP from dCTP (dUTP route): step 2/2. In terms of biological role, this enzyme is involved in nucleotide metabolism: it produces dUMP, the immediate precursor of thymidine nucleotides and it decreases the intracellular concentration of dUTP so that uracil cannot be incorporated into DNA. This Xylella fastidiosa (strain M12) protein is Deoxyuridine 5'-triphosphate nucleotidohydrolase.